Here is a 206-residue protein sequence, read N- to C-terminus: Small ribosomal subunit protein uS4 (206 aa).

The region spanning 96–156 is the S4 RNA-binding domain; sequence GRLDNVVYRM…EKAKKQSRVK (61 aa).

This sequence belongs to the universal ribosomal protein uS4 family. In terms of assembly, part of the 30S ribosomal subunit. Contacts protein S5. The interaction surface between S4 and S5 is involved in control of translational fidelity.

Functionally, one of the primary rRNA binding proteins, it binds directly to 16S rRNA where it nucleates assembly of the body of the 30S subunit. Its function is as follows. With S5 and S12 plays an important role in translational accuracy. The chain is Small ribosomal subunit protein uS4 from Serratia proteamaculans (strain 568).